A 186-amino-acid chain; its full sequence is Elongation factor P (186 aa).

This sequence belongs to the elongation factor P family.

It is found in the cytoplasm. It participates in protein biosynthesis; polypeptide chain elongation. Involved in peptide bond synthesis. Stimulates efficient translation and peptide-bond synthesis on native or reconstituted 70S ribosomes in vitro. Probably functions indirectly by altering the affinity of the ribosome for aminoacyl-tRNA, thus increasing their reactivity as acceptors for peptidyl transferase. The protein is Elongation factor P of Shewanella sp. (strain ANA-3).